The sequence spans 607 residues: Elongation factor 4 (607 aa).

The 183-residue stretch at 11-193 (ENIRNFSIIA…KIVEVVPPPE (183 aa)) folds into the tr-type G domain. GTP contacts are provided by residues 23-28 (DHGKST) and 140-143 (NKID).

It belongs to the TRAFAC class translation factor GTPase superfamily. Classic translation factor GTPase family. LepA subfamily.

It is found in the cell membrane. It carries out the reaction GTP + H2O = GDP + phosphate + H(+). Required for accurate and efficient protein synthesis under certain stress conditions. May act as a fidelity factor of the translation reaction, by catalyzing a one-codon backward translocation of tRNAs on improperly translocated ribosomes. Back-translocation proceeds from a post-translocation (POST) complex to a pre-translocation (PRE) complex, thus giving elongation factor G a second chance to translocate the tRNAs correctly. Binds to ribosomes in a GTP-dependent manner. The chain is Elongation factor 4 from Staphylococcus haemolyticus (strain JCSC1435).